We begin with the raw amino-acid sequence, 572 residues long: Solute carrier family 22 member 16 (572 aa).

A helical membrane pass occupies residues 21 to 41 (IFLYFICAFQNISCGIHYLAS). Asn57 is a glycosylation site (N-linked (GlcNAc...) asparagine). A run of 5 helical transmembrane segments spans residues 156 to 176 (LIQPTFMFGVLLGAVIFGYLS), 183 to 203 (LVLWASSTGVFLFGIAAAFTF), 208 to 228 (FIVARFLLAISGSGYLVVVFV), 244 to 264 (IHLHSFFAFGTMVVALTGYFV), and 268 to 288 (WIYQIVLSSVTVPFVLCCWML). Residue Asn315 is glycosylated (N-linked (GlcNAc...) asparagine). 6 consecutive transmembrane segments (helical) span residues 359 to 379 (TLILWLIWFTGCLGFYTFSLN), 389 to 409 (LNLFLMGVVEIPAYVLVCLGM), 416 to 436 (NILIFSLLSSAVTSGVIMVIP), 441 to 461 (VWLVVASMAGKFFIGAAFGLI), 476 to 496 (LAVGSGSTVGRVGSIVAPLCI), and 503 to 523 (IFMPQLLVGTLALVSGVLTFL). The N-linked (GlcNAc...) asparagine glycan is linked to Asn559.

Belongs to the major facilitator (TC 2.A.1) superfamily. Organic cation transporter (TC 2.A.1.19) family.

It is found in the cell membrane. It carries out the reaction (R)-carnitine(in) = (R)-carnitine(out). The catalysed reaction is spermidine(in) = spermidine(out). Functionally, facilitative organic cation transporter that mediates the transport of carnitine as well as the polyamine spermidine. Mediates the partially Na(+)-dependent bidirectional transport of carnitine. May mediate L-carnitine secretion from testis epididymal epithelium into the lumen which is involved in the maturation of spermatozoa. This chain is Solute carrier family 22 member 16 (SLC22A16), found in Bos taurus (Bovine).